We begin with the raw amino-acid sequence, 381 residues long: Succinyl-diaminopimelate desuccinylase (381 aa).

Position 72 (H72) interacts with Zn(2+). D74 is a catalytic residue. Zn(2+) is bound at residue D105. E139 acts as the Proton acceptor in catalysis. E140, E168, and H354 together coordinate Zn(2+).

This sequence belongs to the peptidase M20A family. DapE subfamily. In terms of assembly, homodimer. Zn(2+) serves as cofactor. Requires Co(2+) as cofactor.

The enzyme catalyses N-succinyl-(2S,6S)-2,6-diaminopimelate + H2O = (2S,6S)-2,6-diaminopimelate + succinate. It participates in amino-acid biosynthesis; L-lysine biosynthesis via DAP pathway; LL-2,6-diaminopimelate from (S)-tetrahydrodipicolinate (succinylase route): step 3/3. In terms of biological role, catalyzes the hydrolysis of N-succinyl-L,L-diaminopimelic acid (SDAP), forming succinate and LL-2,6-diaminopimelate (DAP), an intermediate involved in the bacterial biosynthesis of lysine and meso-diaminopimelic acid, an essential component of bacterial cell walls. This Shewanella sp. (strain MR-7) protein is Succinyl-diaminopimelate desuccinylase.